We begin with the raw amino-acid sequence, 378 residues long: Glutamate 5-kinase (378 aa).

Lysine 17 is an ATP binding site. 3 residues coordinate substrate: serine 58, aspartate 145, and asparagine 157. Residues 177–178 (TD) and 221–227 (TGGMMTK) each bind ATP. The region spanning 286–364 (VGKLYLDSGA…KEIPTILGYV (79 aa)) is the PUA domain.

It belongs to the glutamate 5-kinase family.

It localises to the cytoplasm. It catalyses the reaction L-glutamate + ATP = L-glutamyl 5-phosphate + ADP. It participates in amino-acid biosynthesis; L-proline biosynthesis; L-glutamate 5-semialdehyde from L-glutamate: step 1/2. Functionally, catalyzes the transfer of a phosphate group to glutamate to form L-glutamate 5-phosphate. The protein is Glutamate 5-kinase of Nostoc sp. (strain PCC 7120 / SAG 25.82 / UTEX 2576).